The following is a 153-amino-acid chain: UPF0260 protein YcgN (153 aa).

The protein belongs to the UPF0260 family.

This chain is UPF0260 protein YcgN, found in Salmonella dublin (strain CT_02021853).